The following is a 520-amino-acid chain: Protein EARLY FLOWERING 5 (520 aa).

3 consecutive short sequence motifs (nuclear localization signal) follow at residues Y16 to R23, I52 to K59, and K71 to T78. The disordered stretch occupies residues V83–A410. Basic and acidic residues-rich tracts occupy residues K87–G97 and L114–V126. Over residues S148 to S168 the composition is skewed to low complexity. Pro residues-rich tracts occupy residues P198–P207, S216–P227, and P235–G253. 3 stretches are compositionally biased toward polar residues: residues S267–S281, A300–L312, and Q326–Q343. Pro residues-rich tracts occupy residues V346–P369 and P378–S403.

In terms of tissue distribution, in seedlings, mostly expressed in the shoot apical meristem (SAM) and root tip.

The protein resides in the nucleus. In terms of biological role, involved in the regulation of flowering time in both long and short days. This chain is Protein EARLY FLOWERING 5, found in Arabidopsis thaliana (Mouse-ear cress).